A 338-amino-acid chain; its full sequence is Ketol-acid reductoisomerase (NADP(+)) (338 aa).

Positions 1–181 (MKVYYDKDAD…GGTKGGVIET (181 aa)) constitute a KARI N-terminal Rossmann domain. Residues 24 to 27 (YGSQ), Arg-47, and Ser-52 each bind NADP(+). The active site involves His-107. Gly-133 contributes to the NADP(+) binding site. One can recognise a KARI C-terminal knotted domain in the interval 182–327 (NFREETETDL…GQLRDMMPWI (146 aa)). Residues Asp-190, Glu-194, Glu-226, and Glu-230 each contribute to the Mg(2+) site. A substrate-binding site is contributed by Ser-251.

The protein belongs to the ketol-acid reductoisomerase family. Requires Mg(2+) as cofactor.

The catalysed reaction is (2R)-2,3-dihydroxy-3-methylbutanoate + NADP(+) = (2S)-2-acetolactate + NADPH + H(+). It catalyses the reaction (2R,3R)-2,3-dihydroxy-3-methylpentanoate + NADP(+) = (S)-2-ethyl-2-hydroxy-3-oxobutanoate + NADPH + H(+). The protein operates within amino-acid biosynthesis; L-isoleucine biosynthesis; L-isoleucine from 2-oxobutanoate: step 2/4. It functions in the pathway amino-acid biosynthesis; L-valine biosynthesis; L-valine from pyruvate: step 2/4. Involved in the biosynthesis of branched-chain amino acids (BCAA). Catalyzes an alkyl-migration followed by a ketol-acid reduction of (S)-2-acetolactate (S2AL) to yield (R)-2,3-dihydroxy-isovalerate. In the isomerase reaction, S2AL is rearranged via a Mg-dependent methyl migration to produce 3-hydroxy-3-methyl-2-ketobutyrate (HMKB). In the reductase reaction, this 2-ketoacid undergoes a metal-dependent reduction by NADPH to yield (R)-2,3-dihydroxy-isovalerate. This Dechloromonas aromatica (strain RCB) protein is Ketol-acid reductoisomerase (NADP(+)).